Here is a 222-residue protein sequence, read N- to C-terminus: Probable transaldolase (222 aa).

Lys-91 functions as the Schiff-base intermediate with substrate in the catalytic mechanism.

It belongs to the transaldolase family. Type 3B subfamily.

The protein localises to the cytoplasm. It carries out the reaction D-sedoheptulose 7-phosphate + D-glyceraldehyde 3-phosphate = D-erythrose 4-phosphate + beta-D-fructose 6-phosphate. It functions in the pathway carbohydrate degradation; pentose phosphate pathway; D-glyceraldehyde 3-phosphate and beta-D-fructose 6-phosphate from D-ribose 5-phosphate and D-xylulose 5-phosphate (non-oxidative stage): step 2/3. Its function is as follows. Transaldolase is important for the balance of metabolites in the pentose-phosphate pathway. The protein is Probable transaldolase of Chlorobaculum parvum (strain DSM 263 / NCIMB 8327) (Chlorobium vibrioforme subsp. thiosulfatophilum).